Here is a 497-residue protein sequence, read N- to C-terminus: KDDFKGPEFRSRSKMKTENLKKRGEGLHGIVSCTACGQQVNHFQKDSIYRHPTLKVLICKNCYKYYMSDDISRDADGMDEQCRWCAEGGNLICCDFCHNAFCKKCILRNLGRKELSAIMDENSQWYCYICRPEPLLDLVTACHSVFKNLEQLLQQNKKKIKVESEKSNKLFEHTHRFSPKKNVSSCNGEEKKSDDAYSGSVTYSFTALMVPKDIVKKTKKLVETTASMNTSFVRFLKQASENPEVSPVTKLRQLKAFKSVLNDVKKVHLALEGSLNVEIRTLEALNKETVTKEHKAEGVKPDTEVTKVEVYCAPKKKDFSKCATKLSVKQVDSEINGQSLPVVGQPVHKTTSAEDKKSSRKDPHFEPANTSEALDMDFSLLIFPLIFIFFELSSCYFLLSSSFLFQSCFSLTSIFLLQIVDLLFFKFYFFFKISLISIFLLQIVHLLFSLNLFSSKLFFLFLNFFSFFKLSTFQIPNFSSKMLFPDFYLPLPILLFL.

Glycyl lysine isopeptide (Lys-Gly) (interchain with G-Cter in SUMO2) cross-links involve residues Lys1 and Lys5. The ADD domain occupies 21 to 158 (KKRGEGLHGI…LEQLLQQNKK (138 aa)). A GATA-type; atypical zinc finger spans residues 32 to 68 (SCTACGQQVNHFQKDSIYRHPTLKVLICKNCYKYYMS). The PHD-type; atypical zinc finger occupies 79 to 134 (DEQCRWCAEGGNLICCDFCHNAFCKKCILRNLGRKELSAIMDENSQWYCYICRPEP). Residue Lys161 forms a Glycyl lysine isopeptide (Lys-Gly) (interchain with G-Cter in SUMO2) linkage. Ser178 is modified (phosphoserine). Residue Lys300 forms a Glycyl lysine isopeptide (Lys-Gly) (interchain with G-Cter in SUMO2) linkage. The interval 346–368 (PVHKTTSAEDKKSSRKDPHFEPA) is disordered. Residues 351–365 (TSAEDKKSSRKDPHF) show a composition bias toward basic and acidic residues.

It belongs to the SNF2/RAD54 helicase family. As to quaternary structure, interacts with DAXX to form the chromatin remodeling complex ATRX:DAXX. Probably binds EZH2. Binds annexin V in a calcium and phosphatidylcholine/phosphatidylserine-dependent manner. Interacts directly with CBX5 via the PxVxL motif. Interacts with RAD50, MRE11 and NBN; indicative for an association with the MRN complex. Interacts with histone MACROH2A1. Interacts with histone H3 peptides methylated at 'Lys-10' with preferences H3K9me3 &gt; H3K9me2 &gt; H3K9me1. Interacts with histone H3 peptides unmethylated at 'Lys-5' (H3K4me0). Interacts with MECP2, SMC1 and SMC3. Interacts with SETDB1, TRIM28 and ZNF274. Expressed in all tissues except developing testis.

The protein resides in the nucleus. Its subcellular location is the chromosome. It localises to the telomere. The protein localises to the PML body. The enzyme catalyses ATP + H2O = ADP + phosphate + H(+). Its function is as follows. Involved in transcriptional regulation and chromatin remodeling. Facilitates DNA replication in multiple cellular environments and is required for efficient replication of a subset of genomic loci. Binds to DNA tandem repeat sequences in both telomeres and euchromatin and in vitro binds DNA quadruplex structures. May help stabilizing G-rich regions into regular chromatin structures by remodeling G4 DNA and incorporating H3.3-containing nucleosomes. Catalytic component of the chromatin remodeling complex ATRX:DAXX which has ATP-dependent DNA translocase activity and catalyzes the replication-independent deposition of histone H3.3 in pericentric DNA repeats outside S-phase and telomeres, and the in vitro remodeling of H3.3-containing nucleosomes. Its heterochromatin targeting is proposed to involve a combinatorial readout of histone H3 modifications (specifically methylation states of H3K9 and H3K4) and association with CBX5. May be involved in transcriptional regulation of telomeric repeat-containing RNA (TERRA). Acts as a negative regulator of chromatin incorporation of transcriptionally repressive histone MACROH2A1, particularily at telomeres. Binds to zinc-finger coding genes with atypical chromatin signatures and regulates its H3K9me3 levels. Forms a complex with ZNF274, TRIM28 and SETDB1 to facilitate the deposition and maintenance of H3K9me3 at the 3' exons of zinc-finger genes. This is Transcriptional regulator ATRX (ATRX) from Notamacropus eugenii (Tammar wallaby).